Here is a 367-residue protein sequence, read N- to C-terminus: Alginate lyase (367 aa).

An N-terminal signal peptide occupies residues 1 to 27; sequence MKTSHLIRIALPGALAAALLASQVSQA. Substrate is bound by residues 65–66, 138–139, and Tyr256; these read SK and HT.

It belongs to the polysaccharide lyase 5 family.

It localises to the periplasm. The catalysed reaction is Eliminative cleavage of alginate to give oligosaccharides with 4-deoxy-alpha-L-erythro-hex-4-enuronosyl groups at their non-reducing ends and beta-D-mannuronate at their reducing end.. Catalyzes the depolymerization of alginate by cleaving the beta-1,4 glycosidic bond between two adjacent sugar residues via a beta-elimination mechanism. May serve to degrade mislocalized alginate that is trapped in the periplasmic space. This Pseudomonas aeruginosa (strain LESB58) protein is Alginate lyase.